The chain runs to 117 residues: Photosystem II reaction center Psb28 protein (117 aa).

This sequence belongs to the Psb28 family. In terms of assembly, part of the photosystem II complex.

The protein localises to the cellular thylakoid membrane. This Prochlorococcus marinus (strain MIT 9312) protein is Photosystem II reaction center Psb28 protein.